A 406-amino-acid polypeptide reads, in one-letter code: Phosphopentomutase (406 aa).

Residues D10, D305, H310, D346, H347, and H358 each coordinate Mn(2+).

This sequence belongs to the phosphopentomutase family. It depends on Mn(2+) as a cofactor.

The protein localises to the cytoplasm. The enzyme catalyses 2-deoxy-alpha-D-ribose 1-phosphate = 2-deoxy-D-ribose 5-phosphate. It catalyses the reaction alpha-D-ribose 1-phosphate = D-ribose 5-phosphate. Its pathway is carbohydrate degradation; 2-deoxy-D-ribose 1-phosphate degradation; D-glyceraldehyde 3-phosphate and acetaldehyde from 2-deoxy-alpha-D-ribose 1-phosphate: step 1/2. In terms of biological role, isomerase that catalyzes the conversion of deoxy-ribose 1-phosphate (dRib-1-P) and ribose 1-phosphate (Rib-1-P) to deoxy-ribose 5-phosphate (dRib-5-P) and ribose 5-phosphate (Rib-5-P), respectively. This Rhizobium johnstonii (strain DSM 114642 / LMG 32736 / 3841) (Rhizobium leguminosarum bv. viciae) protein is Phosphopentomutase.